The primary structure comprises 466 residues: Soluble pyridine nucleotide transhydrogenase (466 aa).

36-45 lines the FAD pocket; that stretch reads ERYQNVGGGC.

The protein belongs to the class-I pyridine nucleotide-disulfide oxidoreductase family. FAD is required as a cofactor.

The protein resides in the cytoplasm. It catalyses the reaction NAD(+) + NADPH = NADH + NADP(+). Its function is as follows. Conversion of NADPH, generated by peripheral catabolic pathways, to NADH, which can enter the respiratory chain for energy generation. The polypeptide is Soluble pyridine nucleotide transhydrogenase (Escherichia fergusonii (strain ATCC 35469 / DSM 13698 / CCUG 18766 / IAM 14443 / JCM 21226 / LMG 7866 / NBRC 102419 / NCTC 12128 / CDC 0568-73)).